The chain runs to 285 residues: uncharacterized protein (285 aa).

Positions Met1 to Ala25 are cleaved as a signal peptide.

This is an uncharacterized protein from Bacillus subtilis (strain 168).